A 620-amino-acid polypeptide reads, in one-letter code: Glutathione-regulated potassium-efflux system protein KefC (620 aa).

12 helical membrane-spanning segments follow: residues 4-24 (HTLI…PIAV), 26-46 (LGLG…PWGL), 54-74 (SILH…GLEL), 90-110 (GALQ…LLGL), 114-134 (VAEL…MQAM), 149-169 (FAVL…IPLL), 178-198 (MGAF…VVLL), 218-238 (VFSA…EEVG), 270-290 (GLLL…GTLL), 294-314 (LRIV…LWLI), 327-347 (WFAV…GAAQ), and 359-379 (SLTL…VILN). The RCK N-terminal domain maps to 399–518 (QPRVIIAGFG…AGVEKPERET (120 aa)). Residues 597–620 (GWQGTEEGKHTGNMADEPETKPSS) form a disordered region.

This sequence belongs to the monovalent cation:proton antiporter 2 (CPA2) transporter (TC 2.A.37) family. KefC subfamily. Homodimer. Interacts with the regulatory subunit KefF.

It localises to the cell inner membrane. Its function is as follows. Pore-forming subunit of a potassium efflux system that confers protection against electrophiles. Catalyzes K(+)/H(+) antiport. The chain is Glutathione-regulated potassium-efflux system protein KefC from Escherichia coli O127:H6 (strain E2348/69 / EPEC).